A 301-amino-acid chain; its full sequence is 5'-3' exonuclease (301 aa).

Residues 182-264 (GYADLALLRG…RVAADVPLPD (83 aa)) enclose the 5'-3' exonuclease domain.

Its function is as follows. 5'-3' exonuclease acting preferentially on double-stranded DNA. In Streptomyces coelicolor (strain ATCC BAA-471 / A3(2) / M145), this protein is 5'-3' exonuclease.